The primary structure comprises 575 residues: Lysine--tRNA ligase (575 aa).

2 residues coordinate Mg(2+): E412 and E419.

It belongs to the class-II aminoacyl-tRNA synthetase family. Homodimer. Mg(2+) serves as cofactor.

It localises to the cytoplasm. It carries out the reaction tRNA(Lys) + L-lysine + ATP = L-lysyl-tRNA(Lys) + AMP + diphosphate. The protein is Lysine--tRNA ligase of Bacteroides fragilis (strain ATCC 25285 / DSM 2151 / CCUG 4856 / JCM 11019 / LMG 10263 / NCTC 9343 / Onslow / VPI 2553 / EN-2).